A 37-amino-acid polypeptide reads, in one-letter code: Alpha-conotoxin TxID (37 aa).

The propeptide occupies 1–21 (FDGRNAAGNDKMSALMALTTR). 2 disulfide bridges follow: Cys23-Cys29 and Cys24-Cys36. Residue Cys36 is modified to Cysteine amide.

Belongs to the conotoxin A superfamily. In terms of processing, unmodified Met-32 is essential for toxin binding to rat alpha-3-beta-4/CHRNA3-CHRNB4 nAChR. An oxidation of this methionine provokes a 13.3-fold decrease in inhibitory potency (IC(50)=245 nM instead of 18 nM). Owing to its potent activity, derivatives of this toxin have a potential in the development of a novel drug. Unfortunately, the oxidation of the methionine is readily to happen during toxin synthesis and oxidation steps as well as under oxidative environment in vivo, which should still be considered to find a solution to this major drawback. Expressed by the venom duct.

Its subcellular location is the secreted. Its function is as follows. Alpha-conotoxins act on postsynaptic membranes, they bind to the nicotinic acetylcholine receptors (nAChR) and thus inhibit them. This toxin inhibits alpha-3-beta-4/CHRNA3-CHRNB4 (IC(50)=3.6-18.38 nM), alpha-6/alpha-3-beta-4 (CHRNA6/CHRNA3-CHRNB4) (IC(50)=33.9-94.1 nM), and alpha-2-beta-4/CHRNA2-CHRNB4 (IC(50)=4550 nM) nAChRs. The toxin competes with agonists in the orthosteric binding site of alpha-3-beta-4/CHRNA3-CHRNB4 and alpha-6-beta-4/CHRNA6-CHRNB4. The chain is Alpha-conotoxin TxID from Conus textile (Cloth-of-gold cone).